Consider the following 552-residue polypeptide: FERRY endosomal RAB5 effector complex subunit 3 (552 aa).

Positions 383–403 (LKESLDSGNQNGGNDDKTKNA) are disordered.

As to quaternary structure, component of the FERRY complex composed of five subunits, TBCK, PPP1R21, FERRY3, CRYZL1 and GATD1 with a ratio of 1:2:1:2:4, respectively.

Its subcellular location is the cytoplasm. It is found in the early endosome. Functionally, component of the FERRY complex (Five-subunit Endosomal Rab5 and RNA/ribosome intermediary). The FERRY complex directly interacts with mRNAs and RAB5A, and functions as a RAB5A effector involved in the localization and the distribution of specific mRNAs most likely by mediating their endosomal transport. The complex recruits mRNAs and ribosomes to early endosomes through direct mRNA-interaction. Plays a role in mast cell degranulation. The protein is FERRY endosomal RAB5 effector complex subunit 3 of Pongo abelii (Sumatran orangutan).